The primary structure comprises 418 residues: Glutamyl-tRNA reductase (418 aa).

Residues 49-52 (TCNR), Ser109, 114-116 (EPQ), and Gln120 each bind substrate. Residue Cys50 is the Nucleophile of the active site. Position 189-194 (189-194 (GAGETI)) interacts with NADP(+).

It belongs to the glutamyl-tRNA reductase family. As to quaternary structure, homodimer.

It catalyses the reaction (S)-4-amino-5-oxopentanoate + tRNA(Glu) + NADP(+) = L-glutamyl-tRNA(Glu) + NADPH + H(+). Its pathway is porphyrin-containing compound metabolism; protoporphyrin-IX biosynthesis; 5-aminolevulinate from L-glutamyl-tRNA(Glu): step 1/2. In terms of biological role, catalyzes the NADPH-dependent reduction of glutamyl-tRNA(Glu) to glutamate 1-semialdehyde (GSA). The polypeptide is Glutamyl-tRNA reductase (Salmonella dublin (strain CT_02021853)).